A 144-amino-acid polypeptide reads, in one-letter code: Universal stress protein A homolog 1 (144 aa).

Belongs to the universal stress protein A family. Homodimer.

It is found in the cytoplasm. Its function is as follows. Involved in stress response. This Coxiella burnetii (strain RSA 493 / Nine Mile phase I) protein is Universal stress protein A homolog 1 (uspA1).